Here is a 485-residue protein sequence, read N- to C-terminus: Glutamate--tRNA ligase 2 (485 aa).

The short motif at 10–20 (PSPTGPIHIGN) is the 'HIGH' region element. The 'KMSKS' region signature appears at 252 to 256 (KLSKR). Lys255 provides a ligand contact to ATP.

This sequence belongs to the class-I aminoacyl-tRNA synthetase family. Glutamate--tRNA ligase type 1 subfamily. As to quaternary structure, monomer.

Its subcellular location is the cytoplasm. The catalysed reaction is tRNA(Glu) + L-glutamate + ATP = L-glutamyl-tRNA(Glu) + AMP + diphosphate. Functionally, catalyzes the attachment of glutamate to tRNA(Glu) in a two-step reaction: glutamate is first activated by ATP to form Glu-AMP and then transferred to the acceptor end of tRNA(Glu). This Caldanaerobacter subterraneus subsp. tengcongensis (strain DSM 15242 / JCM 11007 / NBRC 100824 / MB4) (Thermoanaerobacter tengcongensis) protein is Glutamate--tRNA ligase 2.